The sequence spans 325 residues: DNA-directed RNA polymerase subunit alpha (325 aa).

The tract at residues 1–231 (MQTSLLKPKI…DQLSVFAALE (231 aa)) is alpha N-terminal domain (alpha-NTD). Residues 246–325 (IDPILLRPVD…ENWPPAGLDK (80 aa)) are alpha C-terminal domain (alpha-CTD).

It belongs to the RNA polymerase alpha chain family. As to quaternary structure, homodimer. The RNAP catalytic core consists of 2 alpha, 1 beta, 1 beta' and 1 omega subunit. When a sigma factor is associated with the core the holoenzyme is formed, which can initiate transcription.

It catalyses the reaction RNA(n) + a ribonucleoside 5'-triphosphate = RNA(n+1) + diphosphate. Its function is as follows. DNA-dependent RNA polymerase catalyzes the transcription of DNA into RNA using the four ribonucleoside triphosphates as substrates. The protein is DNA-directed RNA polymerase subunit alpha of Burkholderia orbicola (strain MC0-3).